A 344-amino-acid chain; its full sequence is Dihydroorotase (344 aa).

Residues His-14 and His-16 each coordinate Zn(2+). Substrate contacts are provided by residues 16–18 (HLR) and Asn-42. Zn(2+) is bound by residues Lys-100, His-137, and His-175. Lys-100 carries the N6-carboxylysine modification. His-137 is a binding site for substrate. Leu-220 provides a ligand contact to substrate. Residue Asp-248 coordinates Zn(2+). Residue Asp-248 is part of the active site. The substrate site is built by His-252 and Ala-264.

The protein belongs to the metallo-dependent hydrolases superfamily. DHOase family. Class II DHOase subfamily. In terms of assembly, homodimer. Zn(2+) is required as a cofactor.

The catalysed reaction is (S)-dihydroorotate + H2O = N-carbamoyl-L-aspartate + H(+). The protein operates within pyrimidine metabolism; UMP biosynthesis via de novo pathway; (S)-dihydroorotate from bicarbonate: step 3/3. In terms of biological role, catalyzes the reversible cyclization of carbamoyl aspartate to dihydroorotate. This is Dihydroorotase from Cupriavidus necator (strain ATCC 17699 / DSM 428 / KCTC 22496 / NCIMB 10442 / H16 / Stanier 337) (Ralstonia eutropha).